The sequence spans 90 residues: Small ribosomal subunit protein bS16 (90 aa).

It belongs to the bacterial ribosomal protein bS16 family.

The chain is Small ribosomal subunit protein bS16 from Heliobacterium modesticaldum (strain ATCC 51547 / Ice1).